The following is a 398-amino-acid chain: Calreticulin (398 aa).

An N-terminal signal peptide occupies residues 1–19 (MKAVVLVVVSLLALSSINC). An N-domain region spans residues 20-197 (DVFFEEKFPD…NEKVESGDLE (178 aa)). A disulfide bond links C105 and C137. Residues Y109, K111, Y128, and D135 each contribute to the an alpha-D-glucoside site. Repeat copies occupy residues 191–202 (VESGDLEADWDF), 210–221 (DPEAKKPEDWDD), 227–238 (DPEDKKPEDWDK), 244–255 (DPDATKPEDWDD), 259–269 (GEWEPPMIDNP), 273–283 (GVWAPKQIDNP), and 287–297 (GPWVHPEIDNP). The 4 X approximate repeats stretch occupies residues 191-255 (VESGDLEADW…DATKPEDWDD (65 aa)). The segment at 198–308 (ADWDFLPNKK…YTPDSNLYKR (111 aa)) is P-domain. A compositionally biased stretch (basic and acidic residues) spans 207–251 (KIKDPEAKKPEDWDDKPTIPDPEDKKPEDWDKPEHIPDPDATKPE). The segment at 207-257 (KIKDPEAKKPEDWDDKPTIPDPEDKKPEDWDKPEHIPDPDATKPEDWDDEM) is disordered. The 3 X approximate repeats stretch occupies residues 259 to 297 (GEWEPPMIDNPDYKGVWAPKQIDNPAYKGPWVHPEIDNP). The interval 309–398 (DEICAVGLDL…AAPVEEHDEL (90 aa)) is C-domain. D317 is a binding site for an alpha-D-glucoside. The interval 334–398 (DDPAAAKERG…AAPVEEHDEL (65 aa)) is disordered. Basic and acidic residues predominate over residues 337–372 (AAAKERGEVIKKRQEGEKKMKSEQDEAEREKEKAEK). Residues 373 to 387 (PDDEEDDEDLDDETG) are compositionally biased toward acidic residues. The short motif at 395–398 (HDEL) is the Prevents secretion from ER element.

It belongs to the calreticulin family. Monomer. As to expression, expressed in fat bodies. Not expressed in midgut, silk gland, ovary or testis.

It is found in the endoplasmic reticulum lumen. In terms of biological role, molecular calcium-binding chaperone promoting folding, oligomeric assembly and quality control in the ER via the calreticulin/calnexin cycle. This lectin may interact transiently with almost all of the monoglucosylated glycoproteins that are synthesized in the ER. This Bombyx mori (Silk moth) protein is Calreticulin.